Consider the following 260-residue polypeptide: MALRRPMVAGNWKMNGSAALAQELFKKFAVKLQNDSAEVVLCPPTIYLESVRQLLEANKEALNGCLVRMGAQNLSQHDFGAYTGEISGQMLKDSGCRYVIVGHSERRRMYGETSDIVAEKFAAAQKHGLTPILCVGESGPAREARRTFEVIAEELDVVIEKNGTMAFDNAIIAYEPLWAVGTGKSATPEQAQEVHAFIRRRLSEVSPFIGENVRILYGGSVTPSNAADLFAQPDVDGGLIGGASLNSTEFLTLCSIAMSA.

11–13 (NWK) contributes to the substrate binding site. The Electrophile role is filled by H103. E175 acts as the Proton acceptor in catalysis. Residues G181, S220, and 241–242 (GG) each bind substrate.

The protein belongs to the triosephosphate isomerase family. As to quaternary structure, homodimer.

Its subcellular location is the cytoplasm. The catalysed reaction is D-glyceraldehyde 3-phosphate = dihydroxyacetone phosphate. It participates in carbohydrate biosynthesis; gluconeogenesis. Its pathway is carbohydrate degradation; glycolysis; D-glyceraldehyde 3-phosphate from glycerone phosphate: step 1/1. Its function is as follows. Involved in the gluconeogenesis. Catalyzes stereospecifically the conversion of dihydroxyacetone phosphate (DHAP) to D-glyceraldehyde-3-phosphate (G3P). The sequence is that of Triosephosphate isomerase from Shewanella amazonensis (strain ATCC BAA-1098 / SB2B).